The following is a 137-amino-acid chain: Large-conductance mechanosensitive channel (137 aa).

2 helical membrane passes run 10 to 30 (FAMRGNVVDLAVGVIIGAAFG) and 76 to 96 (GVFIQNVFDFLIVAFAIFMAI).

This sequence belongs to the MscL family. As to quaternary structure, homopentamer.

Its subcellular location is the cell inner membrane. Its function is as follows. Channel that opens in response to stretch forces in the membrane lipid bilayer. May participate in the regulation of osmotic pressure changes within the cell. The polypeptide is Large-conductance mechanosensitive channel (Escherichia coli O45:K1 (strain S88 / ExPEC)).